Here is a 276-residue protein sequence, read N- to C-terminus: Release factor glutamine methyltransferase (276 aa).

S-adenosyl-L-methionine-binding positions include 117–121, aspartate 140, tryptophan 168, and asparagine 182; that span reads GTGTG. 182 to 185 is a binding site for substrate; the sequence is NPPY.

It belongs to the protein N5-glutamine methyltransferase family. PrmC subfamily.

The enzyme catalyses L-glutaminyl-[peptide chain release factor] + S-adenosyl-L-methionine = N(5)-methyl-L-glutaminyl-[peptide chain release factor] + S-adenosyl-L-homocysteine + H(+). Its function is as follows. Methylates the class 1 translation termination release factors RF1/PrfA and RF2/PrfB on the glutamine residue of the universally conserved GGQ motif. The polypeptide is Release factor glutamine methyltransferase (Yersinia pestis).